Here is a 479-residue protein sequence, read N- to C-terminus: Protein C-ets-2 (479 aa).

A PNT domain is found at 88–173 (DTFSGFTKEQ…EHLEQMIKDS (86 aa)). Positions 373–453 (IQLWQFLLEL…SGKRYVYRFV (81 aa)) form a DNA-binding region, ETS.

The protein belongs to the ETS family.

It localises to the nucleus. In terms of biological role, probable transcription factor. The sequence is that of Protein C-ets-2 (ETS2) from Gallus gallus (Chicken).